A 170-amino-acid chain; its full sequence is Urease accessory protein UreE (170 aa).

It belongs to the UreE family.

The protein resides in the cytoplasm. Involved in urease metallocenter assembly. Binds nickel. Probably functions as a nickel donor during metallocenter assembly. In Helicobacter pylori (strain ATCC 700392 / 26695) (Campylobacter pylori), this protein is Urease accessory protein UreE.